A 502-amino-acid polypeptide reads, in one-letter code: Protein ANKUB1 (502 aa).

This Homo sapiens (Human) protein is Protein ANKUB1 (ANKUB1).